A 63-amino-acid polypeptide reads, in one-letter code: Rubredoxin-2 (63 aa).

The Rubredoxin-like domain maps to 8-59 (YKLFRCLQCGFEYDEAIGWPDDGIEPGTRWDEIPEDWSCPDCGAAKVDFEMV). 4 residues coordinate Fe cation: Cys-13, Cys-16, Cys-46, and Cys-49.

This sequence belongs to the rubredoxin family. Requires Fe(3+) as cofactor.

In terms of biological role, involved in the hydrocarbon hydroxylating system, which transfers electrons from NADH to rubredoxin reductase and then through rubredoxin to alkane 1 monooxygenase. The sequence is that of Rubredoxin-2 (rubA2) from Rhodococcus erythropolis (Arthrobacter picolinophilus).